We begin with the raw amino-acid sequence, 376 residues long: Putative F-box protein At3g18330 (376 aa).

The F-box domain maps to 1-46; sequence MPMPNLPKELVEEILSFVPATYLKRLSATCKPWNRLIHNDKRFARK.

The protein is Putative F-box protein At3g18330 of Arabidopsis thaliana (Mouse-ear cress).